Here is a 63-residue protein sequence, read N- to C-terminus: Cytochrome c oxidase subunit 5C-1 (63 aa).

A helical transmembrane segment spans residues 15–34 (SEVKELIIGSVLGLAAGGLW).

Belongs to the cytochrome c oxidase subunit 5C family.

It localises to the mitochondrion inner membrane. This protein is one of the nuclear-coded polypeptide chains of cytochrome c oxidase, the terminal oxidase in mitochondrial electron transport. In Helianthus annuus (Common sunflower), this protein is Cytochrome c oxidase subunit 5C-1 (COX5C1).